We begin with the raw amino-acid sequence, 492 residues long: Catalase isozyme 1 (492 aa).

Residues His-65 and Asn-138 contribute to the active site. Tyr-348 contacts heme.

It belongs to the catalase family. Homotetramer. It depends on heme as a cofactor. In whole endosperms (aleurones plus starchy endosperm), in isolated aleurones and in developing seeds.

The protein localises to the peroxisome. It localises to the glyoxysome. It catalyses the reaction 2 H2O2 = O2 + 2 H2O. In terms of biological role, occurs in almost all aerobically respiring organisms and serves to protect cells from the toxic effects of hydrogen peroxide. The sequence is that of Catalase isozyme 1 (CAT1) from Hordeum vulgare (Barley).